We begin with the raw amino-acid sequence, 504 residues long: Maturase K (504 aa).

Belongs to the intron maturase 2 family. MatK subfamily.

It is found in the plastid. The protein localises to the chloroplast. In terms of biological role, usually encoded in the trnK tRNA gene intron. Probably assists in splicing its own and other chloroplast group II introns. The sequence is that of Maturase K from Hamamelis japonica (Japanese witch hazel).